The primary structure comprises 315 residues: Protein sprouty homolog 2 (315 aa).

Over residues 1–15 (MEARAQSGNGSQPLL) the composition is skewed to polar residues. Residues 1-140 (MEARAQSGNG…SEQRLLGSSF (140 aa)) are disordered. Residues 20-32 (DGGRPRGEPDPRD) are compositionally biased toward basic and acidic residues. Residues 108-140 (SRSISTVSSGSRSSTRTSTSSSSSEQRLLGSSF) show a composition bias toward low complexity. The segment at 118–315 (SRSSTRTSTS…VPRRNFEKPT (198 aa)) is required for interaction with CAV1. Positions 177-291 (RCEDCGKCKC…CYDRVNRPGC (115 aa)) constitute an SPR domain. Residues 178 to 315 (CEDCGKCKCK…VPRRNFEKPT (138 aa)) form a required for interaction with TESK1 region.

The protein belongs to the sprouty family. Forms heterodimers with SPRY1. Forms a tripartite complex containing GAB1, METTL13 and SPRY2. Within the complex interacts with METTL13. Interacts with RAF1. Interacts (via C-terminus) with TESK1 (via C-terminus); the interaction disrupts SPRY2 interaction with GRB2, potentially via disruption of SPRY2 serine dephosphorylation. Interacts with PPP2R1A/PP2A-A and PPP2CA/PP2A-C; the interaction with PPP2CA/PP2A-C is inhibited by interaction with TESK1, possibly by vesicular sequestration of SPRY2. Inhibition of the interaction with the serine/threonine-protein phosphatase 2A (PP2A) holoenzyme results in loss of PP2A-mediated dephosphorylation, resulting in the loss of SPRY2 interaction with GRB2. Interacts with GRB2. Interacts with CBL/C-CBL; the interaction inhibits CBL-mediated ubiquitination of EGFR. Interacts (via C-terminus) with CAV1 (via C-terminus). In terms of processing, cleaved at Pro-144 by the prolyl endopeptidase FAP (seprase) activity (in vitro).

It localises to the cytoplasm. Its subcellular location is the cytoskeleton. The protein resides in the cell projection. The protein localises to the ruffle membrane. Its function is as follows. Antagonist of fibroblast growth factor (FGF) pathways via inhibition of FGF-mediated phosphorylation of ERK1/2. Thereby acts as an antagonist of FGF-induced retinal lens fiber differentiation, may inhibit limb bud outgrowth and may negatively modulate respiratory organogenesis. Inhibits TGFB-induced epithelial-to-mesenchymal transition in retinal lens epithelial cells. Inhibits CBL/C-CBL-mediated EGFR ubiquitination. This is Protein sprouty homolog 2 (SPRY2) from Pongo abelii (Sumatran orangutan).